Here is a 1939-residue protein sequence, read N- to C-terminus: Myosin heavy chain, skeletal muscle, adult (1939 aa).

N-acetylalanine is present on Ala-2. A Myosin N-terminal SH3-like domain is found at 34 to 83; the sequence is DAKSSVFVVHPKESFVKGTIQSKEGGKVTVKTEGGETLTVKEDQVFSMNP. Lys-36 carries the post-translational modification N6-methyllysine. The region spanning 87–781 is the Myosin motor domain; it reads DKIEDMAMMT…LLGLLEEMRD (695 aa). Residue Lys-131 is modified to N6,N6,N6-trimethyllysine. 180 to 187 lines the ATP pocket; sequence GESGAGKT. Lys-552 bears the N6,N6,N6-trimethyllysine mark. An actin-binding region spans residues 658–680; sequence LNKLMANLRSTHPHFVRCIIPNE. His-756 bears the Pros-methylhistidine mark. An actin-binding region spans residues 760–774; it reads RFGHTKVFFKAGLLG. The region spanning 784–813 is the IQ domain; it reads LAEIITRTQARCRGFLMRVEYRRMVERRES. Residues 839–841 form a hinge region; sequence IKP. Residues 842 to 1939 adopt a coiled-coil conformation; the sequence is LLKSAESEKE…IHGKKIEEEE (1098 aa).

This sequence belongs to the TRAFAC class myosin-kinesin ATPase superfamily. Myosin family. Muscle myosin is a hexameric protein that consists of 2 heavy chain subunits (MHC), 2 alkali light chain subunits (MLC) and 2 regulatory light chain subunits (MLC-2).

The protein resides in the cytoplasm. It localises to the myofibril. In terms of biological role, muscle contraction. Myosin is a protein that binds to F-actin and has ATPase activity that is activated by F-actin. In Gallus gallus (Chicken), this protein is Myosin heavy chain, skeletal muscle, adult.